The following is a 188-amino-acid chain: Acireductone dioxygenase (188 aa).

Positions 97, 99, 103, and 141 each coordinate Fe(2+). Residues H97, H99, E103, and H141 each coordinate Ni(2+).

It belongs to the acireductone dioxygenase (ARD) family. Monomer. The cofactor is Fe(2+). Ni(2+) serves as cofactor.

The enzyme catalyses 1,2-dihydroxy-5-(methylsulfanyl)pent-1-en-3-one + O2 = 3-(methylsulfanyl)propanoate + CO + formate + 2 H(+). It catalyses the reaction 1,2-dihydroxy-5-(methylsulfanyl)pent-1-en-3-one + O2 = 4-methylsulfanyl-2-oxobutanoate + formate + 2 H(+). It participates in amino-acid biosynthesis; L-methionine biosynthesis via salvage pathway; L-methionine from S-methyl-5-thio-alpha-D-ribose 1-phosphate: step 5/6. Functionally, catalyzes 2 different reactions between oxygen and the acireductone 1,2-dihydroxy-3-keto-5-methylthiopentene (DHK-MTPene) depending upon the metal bound in the active site. Fe-containing acireductone dioxygenase (Fe-ARD) produces formate and 2-keto-4-methylthiobutyrate (KMTB), the alpha-ketoacid precursor of methionine in the methionine recycle pathway. Ni-containing acireductone dioxygenase (Ni-ARD) produces methylthiopropionate, carbon monoxide and formate, and does not lie on the methionine recycle pathway. The protein is Acireductone dioxygenase of Gluconobacter oxydans (strain 621H) (Gluconobacter suboxydans).